Here is a 1162-residue protein sequence, read N- to C-terminus: Leptin receptor (1162 aa).

Positions 1–21 (MTCQKFYVVLLHWEFLYVITA) are cleaved as a signal peptide. Over 22–839 (LNLAYPTSPW…DIAKQQNDAG (818 aa)) the chain is Extracellular. 5 disulfides stabilise this stretch: C37-C90, C89-C99, C131-C142, C186-C195, and C188-C193. 4 N-linked (GlcNAc...) asparagine glycosylation sites follow: N55, N56, N73, and N98. The N-linked (GlcNAc...) asparagine glycan is linked to N187. One can recognise a Fibronectin type-III 1 domain in the interval 238 to 331 (PPLGLRMEVT…LPQLFTTQDV (94 aa)). Residues N275, N345, and N356 are each glycosylated (N-linked (GlcNAc...) asparagine). 2 cysteine pairs are disulfide-bonded: C350-C410 and C411-C416. N-linked (GlcNAc...) asparagine glycosylation is present at N431. 3 disulfides stabilise this stretch: C434–C445, C471–C526, and C486–C496. The interval 465–482 (HRRSLYCPDNPSIRPTSE) is leptin-binding. N-linked (GlcNAc...) asparagine glycans are attached at residues N514, N622, N657, N668, N686, N695, N698, and N726. Fibronectin type-III domains follow at residues 537 to 632 (PPSN…TLVM), 637 to 729 (PMRG…NLTF), and 738 to 831 (AVQS…KDDI). The WSXWS motif motif lies at 620-624 (WSNWS). Residues 840–860 (LYVIVPIIISSCVLLLGTLLI) form a helical membrane-spanning segment. At 861-1162 (SHQRMKKLFW…IENKMCDLTV (302 aa)) the chain is on the cytoplasmic side. The Box 1 motif signature appears at 869-877 (FWDDVPNPK). The residue at position 880 (S880) is a Phosphoserine. The required for JAK2 activation stretch occupies residues 891–896 (ETFEHL). Positions 896-904 (LFTKHAESV) are required for STAT3 phosphorylation. Y985 carries the post-translational modification Phosphotyrosine; by JAK2. Y1077 carries the phosphotyrosine modification. Position 1138 is a phosphotyrosine; by JAK2 (Y1138).

Belongs to the type I cytokine receptor family. Type 2 subfamily. As to quaternary structure, present as a mixture of monomers and dimers. The phosphorylated receptor binds a number of SH2 domain-containing proteins such as JAK2, STAT3, PTPN11, and SOCS3. Interaction with SOCS3 inhibits JAK/STAT signaling and MAPK cascade. Post-translationally, on ligand binding, phosphorylated on two conserved C-terminal tyrosine residues (isoform B only) by JAK2. Tyr-985 is required for complete binding and activation of PTPN11, ERK/FOS activation,for interaction with SOCS3 and SOCS3 mediated inhibition of leptin signaling. Phosphorylation on Tyr-1138 is required for STAT3 binding/activation. Phosphorylation of Tyr-1077 has a more accessory role. As to expression, isoform B is expressed in kidney, liver, lung, ovary, spleen and uterus. Increased level in uterus during gestation. Isoform A and isoform C are predominantly expressed in cerebral microvessels and choroid plexus, with lower levels in cortex, cerebellum and hypothalamus but also liver and lung. Isoform F is expressed at high levels in brain, liver and spleen and less in stomach, kidney, thymus, heart, lung and hypothalamus.

The protein localises to the cell membrane. Its subcellular location is the basolateral cell membrane. It localises to the secreted. Functionally, receptor for hormone LEP/leptin. On ligand binding, mediates LEP central and peripheral effects through the activation of different signaling pathways such as JAK2/STAT3 and MAPK cascade/FOS. In the hypothalamus, LEP acts as an appetite-regulating factor that induces a decrease in food intake and an increase in energy consumption by inducing anorexinogenic factors and suppressing orexigenic neuropeptides, also regulates bone mass and secretion of hypothalamo-pituitary-adrenal hormones. In the periphery, increases basal metabolism, influences reproductive function, regulates pancreatic beta-cell function and insulin secretion, is pro-angiogenic and affects innate and adaptive immunity. Control of energy homeostasis and melanocortin production (stimulation of POMC and full repression of AgRP transcription) is mediated by STAT3 signaling, whereas distinct signals regulate NPY and the control of fertility, growth and glucose homeostasis. Involved in the regulation of counter-regulatory response to hypoglycemia by inhibiting neurons of the parabrachial nucleus. Has a specific effect on T lymphocyte responses, differentially regulating the proliferation of naive and memory T-cells. Leptin increases Th1 and suppresses Th2 cytokine production. In terms of biological role, may transport LEP across the blood-brain barrier. Binds LEP and mediates LEP endocytosis. Does not induce phosphorylation of and activate STAT3. Antagonizes Isoform A and isoform B-mediated LEP binding and endocytosis. The protein is Leptin receptor (Lepr) of Rattus norvegicus (Rat).